The primary structure comprises 149 residues: Arginine repressor (149 aa).

Belongs to the ArgR family.

It is found in the cytoplasm. It functions in the pathway amino-acid biosynthesis; L-arginine biosynthesis [regulation]. Regulates arginine biosynthesis genes. The sequence is that of Arginine repressor from Alkaliphilus oremlandii (strain OhILAs) (Clostridium oremlandii (strain OhILAs)).